A 158-amino-acid chain; its full sequence is Transcription elongation factor GreA (158 aa).

Positions 47-73 (AEYHAAREKQSFIEGRIQELQAKLARA) form a coiled coil.

Belongs to the GreA/GreB family.

Its function is as follows. Necessary for efficient RNA polymerase transcription elongation past template-encoded arresting sites. The arresting sites in DNA have the property of trapping a certain fraction of elongating RNA polymerases that pass through, resulting in locked ternary complexes. Cleavage of the nascent transcript by cleavage factors such as GreA or GreB allows the resumption of elongation from the new 3'terminus. GreA releases sequences of 2 to 3 nucleotides. This chain is Transcription elongation factor GreA, found in Thermodesulfovibrio yellowstonii (strain ATCC 51303 / DSM 11347 / YP87).